Consider the following 209-residue polypeptide: Large ribosomal subunit protein uL3 (209 aa).

The tract at residues 118–152 is disordered; sequence GFQGAIKRHGQSRGPMSHGSRYHRRPGSMGPVDPN.

This sequence belongs to the universal ribosomal protein uL3 family. Part of the 50S ribosomal subunit. Forms a cluster with proteins L14 and L19.

In terms of biological role, one of the primary rRNA binding proteins, it binds directly near the 3'-end of the 23S rRNA, where it nucleates assembly of the 50S subunit. This Bacillus licheniformis (strain ATCC 14580 / DSM 13 / JCM 2505 / CCUG 7422 / NBRC 12200 / NCIMB 9375 / NCTC 10341 / NRRL NRS-1264 / Gibson 46) protein is Large ribosomal subunit protein uL3.